The sequence spans 95 residues: Acylphosphatase (95 aa).

The region spanning 10–95 (CIHATVSGKV…VEDYSDFRVR (86 aa)) is the Acylphosphatase-like domain. Catalysis depends on residues arginine 25 and asparagine 43.

This sequence belongs to the acylphosphatase family.

The catalysed reaction is an acyl phosphate + H2O = a carboxylate + phosphate + H(+). The polypeptide is Acylphosphatase (acyP) (Coxiella burnetii (strain Dugway 5J108-111)).